The primary structure comprises 381 residues: Subtilisin E (381 aa).

The N-terminal stretch at 1–29 (MRSKKLWISLLFALTLIFTMAFSNMSAQA) is a signal peptide. Residues 30–106 (AGKSSTEKKY…VEEDHIAHEY (77 aa)) constitute a propeptide that is removed on maturation. The region spanning 38-103 (KYIVGFKQTM…VAYVEEDHIA (66 aa)) is the Inhibitor I9 domain. Q108 is a binding site for Ca(2+). One can recognise a Peptidase S8 domain in the interval 111–380 (PYGISQIKAP…KGLINVQAAA (270 aa)). The active-site Charge relay system is D138. D147 is a Ca(2+) binding site. H170 (charge relay system) is an active-site residue. Positions 181, 183, 185, 187, 275, 277, 280, and 303 each coordinate Ca(2+). The Charge relay system role is filled by S327.

The protein belongs to the peptidase S8 family. Ca(2+) is required as a cofactor.

It localises to the secreted. The catalysed reaction is Hydrolysis of proteins with broad specificity for peptide bonds, and a preference for a large uncharged residue in P1. Hydrolyzes peptide amides.. Inhibited by PMSF (phenylmethylsulphonyl fluoride) and 3,4-dichloroisocoumarin but not by EDTA (shown for strain RT-5). Functionally, an extracellular alkaline serine protease, it catalyzes the hydrolysis of proteins and peptide amides. The polypeptide is Subtilisin E (Bacillus subtilis (strain 168)).